The primary structure comprises 621 residues: Stimulated by retinoic acid gene 6 protein-like (621 aa).

Topologically, residues 1-21 (MLAASTRTRQINITCDNPVDR) are extracellular. A glycan (N-linked (GlcNAc...) asparagine) is linked at N12. The helical transmembrane segment at 22-42 (EVFLHYSLIPSLCIILVLSFL) threads the bilayer. The Cytoplasmic segment spans residues 43–53 (QRREHRRQRDD). The chain crosses the membrane as a helical span at residues 54–74 (TSYLLGNHFGIIVPLDFVGTF). Topologically, residues 75–110 (SNRWSYGAAFGATANKVMFLFSEGYQPLTVPQWAQA) are extracellular. A helical transmembrane segment spans residues 111 to 131 (FVLFIGGMEVGLSYFPFFACL). The Cytoplasmic segment spans residues 132–137 (SSEFQL). A helical membrane pass occupies residues 138-158 (VSSILGFSYSLTWFVVTVLQI). The Extracellular portion of the chain corresponds to 159–173 (SQCPHGQFLGRFETL). A helical membrane pass occupies residues 174–194 (VFYWPSLLCLGFLLGRFLHMF). Residues 195 to 258 (LKALPVHLGL…CFQFPSRMVG (64 aa)) lie on the Cytoplasmic side of the membrane. The chain crosses the membrane as a helical span at residues 259–279 (TLLLAFICLYLFIVIEFCVFL). The Extracellular portion of the chain corresponds to 280–321 (HVRDKLDMFEDKLESYLTHMNETGTLTPIILQVKELISVTKG). The helical transmembrane segment at 322–342 (VWVVTILPAALTCVTYLFHIL) threads the bilayer. Residues 343–383 (ACYRKHMKRLWAGDKHFLPQKFHSPSSAASVVAIARYSGWQ) are Cytoplasmic-facing. Residues 384 to 404 (IAYILWGYLIIHVVQSLCGVM) form a helical membrane-spanning segment. Over 405–424 (LMYGLVLPIIHHRGLEMLQG) the chain is Extracellular. Residues 425 to 445 (FGLGVLTLSIVVGLIILQVWI) traverse the membrane as a helical segment. Over 446 to 476 (AGTFFLQPKLGTSDKQKPLALNNRRAFHNFN) the chain is Cytoplasmic. A helical transmembrane segment spans residues 477-497 (YFLFFYNVLLGLGACLSRLLI). Residues 498–621 (SCLLGTWLIA…TQILLTCSDC (124 aa)) are Extracellular-facing. Residue T612 is modified to Phosphothreonine.

Glycosylated. Highly expressed in liver and small intestine. Also expressed in spleen, kidney, colon, stomach, placenta, adipose tissue and isolated adipocytes.

It localises to the cell membrane. Its function is as follows. Acts as a high-affinity cell-surface receptor for retinol-binding protein RBP4 and mediates RBP4-dependent retinol uptake in the liver. This Mus musculus (Mouse) protein is Stimulated by retinoic acid gene 6 protein-like.